The sequence spans 163 residues: UPF0478 protein SERP1299 (163 aa).

Residues 7 to 27 (IAGIIAAIAFLILCIGIVVVL) form a helical membrane-spanning segment.

It belongs to the UPF0478 family.

The protein resides in the cell membrane. The chain is UPF0478 protein SERP1299 from Staphylococcus epidermidis (strain ATCC 35984 / DSM 28319 / BCRC 17069 / CCUG 31568 / BM 3577 / RP62A).